The primary structure comprises 238 residues: Ribonuclease PH (238 aa).

Residues Arg-86 and 124–126 (GTR) contribute to the phosphate site.

This sequence belongs to the RNase PH family. Homohexameric ring arranged as a trimer of dimers.

The catalysed reaction is tRNA(n+1) + phosphate = tRNA(n) + a ribonucleoside 5'-diphosphate. Phosphorolytic 3'-5' exoribonuclease that plays an important role in tRNA 3'-end maturation. Removes nucleotide residues following the 3'-CCA terminus of tRNAs; can also add nucleotides to the ends of RNA molecules by using nucleoside diphosphates as substrates, but this may not be physiologically important. Probably plays a role in initiation of 16S rRNA degradation (leading to ribosome degradation) during starvation. This chain is Ribonuclease PH, found in Sphingopyxis alaskensis (strain DSM 13593 / LMG 18877 / RB2256) (Sphingomonas alaskensis).